The sequence spans 387 residues: Putative protein FAM157C (387 aa).

Disordered regions lie at residues 1-21 (MGPL…PLPK), 182-226 (TARP…GAEP), and 329-353 (RARD…TSSG).

This sequence belongs to the FAM157 family.

This Homo sapiens (Human) protein is Putative protein FAM157C (FAM157C).